A 250-amino-acid polypeptide reads, in one-letter code: Kv channel-interacting protein 4 (250 aa).

Residues 2 to 44 (NVRRVESISAQLEEASSTGGFLYAQNSTKRSIKERLMKLLPCS) form a KIS region. Phosphoserine is present on residues S17 and S56. The EF-hand 1; degenerate domain maps to 61–117 (LEMATVRHRPEALELLEAQSKFTKKELQILYRGFKNECPSGVVNEETFKEIYSQFFP). 3 EF-hand domains span residues 120 to 155 (DSTTYAHFLFNAFDTDHNGAVSFEDFIKGLSILLRG), 156 to 191 (TVQEKLNWAFNLYDINKDGYITKEEMLDIMKAIYDM), and 204 to 239 (APRQHVETFFQKMDKNKDGVVTIDEFIESCQKDENI). Ca(2+) is bound by residues D133, D135, N137, D144, D169, N171, D173, Y175, E180, D217, N219, D221, and E228. The interaction with KCND2 stretch occupies residues 237–250 (ENIMRSMQLFENVI).

Belongs to the recoverin family. As to quaternary structure, component of heteromultimeric potassium channels. Identified in potassium channel complexes containing KCND1, KCND2, KCND3, KCNIP1, KCNIP2, KCNIP3, KCNIP4, DPP6 and DPP10. Interacts with KCND2. Interacts with KCND3. Interacts with the C-terminus of PSEN2 and probably PSEN1.

It localises to the cell membrane. The protein localises to the cytoplasm. The protein resides in the peroxisome. Functionally, regulatory subunit of Kv4/D (Shal)-type voltage-gated rapidly inactivating A-type potassium channels. Modulates KCND2 channel density, inactivation kinetics and rate of recovery from inactivation in a calcium-dependent and isoform-specific manner. Modulates KCND3/Kv4.3 currents. Isoform 4 does not increase KCND2 expression at the cell membrane. Isoform 4 retains KCND3 in the endoplasmic reticulum and negatively regulates its expression at the cell membrane. This chain is Kv channel-interacting protein 4 (KCNIP4), found in Macaca fascicularis (Crab-eating macaque).